Consider the following 74-residue polypeptide: ERTHTGEKPFECSQCHKRFTRDHHLKTHMRLHTGEKPYHCTHCDRHFVQVANLRRHLRVHTGERPYACELCASR.

4 C2H2-type zinc fingers span residues Glu-1–His-4, Phe-10–His-32, Tyr-38–His-60, and Tyr-66–Arg-74.

It belongs to the krueppel C2H2-type zinc-finger protein family.

It is found in the nucleus. Krueppel is a gap class segmentation protein. The sequence is that of Protein krueppel (Kr) from Euscelis plebejus (Leafhopper).